The primary structure comprises 761 residues: Xaa-Pro dipeptidyl-peptidase (761 aa).

Catalysis depends on charge relay system residues S347, D467, and H497.

This sequence belongs to the peptidase S15 family. As to quaternary structure, homodimer.

Its subcellular location is the cytoplasm. It carries out the reaction Hydrolyzes Xaa-Pro-|- bonds to release unblocked, N-terminal dipeptides from substrates including Ala-Pro-|-p-nitroanilide and (sequentially) Tyr-Pro-|-Phe-Pro-|-Gly-Pro-|-Ile.. Functionally, removes N-terminal dipeptides sequentially from polypeptides having unsubstituted N-termini provided that the penultimate residue is proline. The protein is Xaa-Pro dipeptidyl-peptidase of Streptococcus agalactiae serotype III (strain NEM316).